The sequence spans 873 residues: Serine/threonine-protein phosphatase 4 regulatory subunit 4 (873 aa).

HEAT repeat units lie at residues 213-251 (ILPL…TKSV), 252-290 (VLPE…RSQT), and 392-427 (NFHM…SKLL). Residues 686-720 (QKKFYEKDLLDQEKEREELLLLEMEQLEKEKQQND) are a coiled coil. A compositionally biased stretch (basic and acidic residues) spans 713–737 (EKEKQQNDGRPMSDKMFEKKRRDTK). Positions 713–766 (EKEKQQNDGRPMSDKMFEKKRRDTKTPTQSLPKNIPISVPGPSSVTPSTSKEIK) are disordered. The span at 747–762 (IPISVPGPSSVTPSTS) shows a compositional bias: low complexity. Serine 775 is subject to Phosphoserine. At threonine 797 the chain carries Phosphothreonine. Positions 822–858 (TRNASSVPSSFSPNTPLPSTSRGTGNSVDPKSSGSKD) are enriched in polar residues. Positions 822–873 (TRNASSVPSSFSPNTPLPSTSRGTGNSVDPKSSGSKDTQPRKATLKSRKSNP) are disordered. Residues 864-873 (ATLKSRKSNP) show a composition bias toward basic residues.

As to quaternary structure, serine/threonine-protein phosphatase 4 (PP4) occurs in different assemblies of the catalytic and one or more regulatory subunits. Component of the PP4 complex PPP4C-PPP4R4.

Its subcellular location is the cytoplasm. Functionally, putative regulatory subunit of serine/threonine-protein phosphatase 4. This is Serine/threonine-protein phosphatase 4 regulatory subunit 4 (PPP4R4) from Homo sapiens (Human).